Consider the following 165-residue polypeptide: Large ribosomal subunit protein uL10 (165 aa).

Belongs to the universal ribosomal protein uL10 family. Part of the ribosomal stalk of the 50S ribosomal subunit. The N-terminus interacts with L11 and the large rRNA to form the base of the stalk. The C-terminus forms an elongated spine to which L12 dimers bind in a sequential fashion forming a multimeric L10(L12)X complex.

Its function is as follows. Forms part of the ribosomal stalk, playing a central role in the interaction of the ribosome with GTP-bound translation factors. This Burkholderia ambifaria (strain MC40-6) protein is Large ribosomal subunit protein uL10.